Consider the following 380-residue polypeptide: Erythronate-4-phosphate dehydrogenase (380 aa).

The substrate site is built by Ser-45 and Thr-66. Residues 126-127, Asp-146, Thr-174, 205-207, and Asp-231 each bind NAD(+); these read QV and ASR. Arg-207 is an active-site residue. The active site involves Glu-236. His-253 (proton donor) is an active-site residue. Gly-256 lines the NAD(+) pocket. Tyr-257 contributes to the substrate binding site.

This sequence belongs to the D-isomer specific 2-hydroxyacid dehydrogenase family. PdxB subfamily. Homodimer.

It is found in the cytoplasm. The catalysed reaction is 4-phospho-D-erythronate + NAD(+) = (R)-3-hydroxy-2-oxo-4-phosphooxybutanoate + NADH + H(+). Its pathway is cofactor biosynthesis; pyridoxine 5'-phosphate biosynthesis; pyridoxine 5'-phosphate from D-erythrose 4-phosphate: step 2/5. Its function is as follows. Catalyzes the oxidation of erythronate-4-phosphate to 3-hydroxy-2-oxo-4-phosphonooxybutanoate. The protein is Erythronate-4-phosphate dehydrogenase of Pseudomonas savastanoi pv. phaseolicola (strain 1448A / Race 6) (Pseudomonas syringae pv. phaseolicola (strain 1448A / Race 6)).